The chain runs to 308 residues: MAWAMDNAILETILQRVRPLIGQGKVAAYIPALASVEGSKLGIAICTVDGQHYQAGDAHERFSIQSISKVLSLVVTMRHYPEEEIWQRVGKDPSGSPFNSLVQLEMEQGIPRNPFINAGALVVCDMLQGRLSAPRQRMLEVVRALCGVSDITYDATVARSEFEHSARNAAIAWLMKSFGNFHHDVPTVLQNYFHYCALKMSCMELARTFVFLANQGEAFHLDEPVVTPMQARQINALMATSGMYQNAGEFAWRVGLPAKSGVGGGIVAIVPHEMAIAVWSPELDPAGNSLAGIAALEQLTQTLGRSVY.

7 residues coordinate substrate: serine 66, asparagine 117, glutamate 161, asparagine 168, tyrosine 192, tyrosine 244, and valine 262.

This sequence belongs to the glutaminase family. As to quaternary structure, homotetramer.

It catalyses the reaction L-glutamine + H2O = L-glutamate + NH4(+). This chain is Glutaminase, found in Salmonella dublin (strain CT_02021853).